The chain runs to 203 residues: Ras-related protein Rab-13 (203 aa).

Residues serine 17, glycine 18, glycine 20, lysine 21, threonine 22, cysteine 23, and threonine 40 each coordinate GTP. Threonine 22 is a binding site for Mg(2+). A Switch 1 motif is present at residues 31-45 (DNFNSTYISTIGIDF). Threonine 40 contributes to the Mg(2+) binding site. Glycyl lysine isopeptide (Lys-Gly) (interchain with G-Cter in ubiquitin) cross-links involve residues lysine 46 and lysine 58. Aspartate 63 lines the Mg(2+) pocket. Positions 63–80 (DTAGQERFKTITTAYYRG) match the Switch 2 motif. The GTP site is built by glycine 66, asparagine 121, lysine 122, aspartate 124, alanine 152, and lysine 153. Residues 173–203 (TGGRRSGNSSKPSSTDLKVSDKKNSNKCSLG) form a disordered region. Serine 178 bears the Phosphoserine mark. Over residues 178 to 189 (SGNSSKPSSTDL) the composition is skewed to polar residues. Cysteine 200 is subject to Cysteine methyl ester. Cysteine 200 carries S-geranylgeranyl cysteine lipidation. Positions 201-203 (SLG) are cleaved as a propeptide — removed in mature form.

This sequence belongs to the small GTPase superfamily. Rab family. In terms of assembly, interacts (GTP-bound form) with MICALL2; competes with RAB8A and is involved in tight junctions assembly. Interacts (GTP-bound form) with MICALL1. Interacts (GTP-bound form) with MICAL1, MICAL3, MICALCL, EHBP1 and EHBP1L1; ternary complexes of RAB8A, RAB13 and either MICAL1 or EHBP1L1 are possible. Interacts with PRKACA; downstream effector of RAB13 involved in tight junction assembly. Interacts with GRB2; may recruit RAB13 to the leading edge of migrating endothelial cells where it can activate RHOA. Interacts (isoprenylated form) with PDE6D; dissociates RAB13 from membranes. Interacts with BICDL2/BICDR2. Interacts with LEPROT and LEPROTL1. The cofactor is Mg(2+). In terms of processing, ubiquitinated via 'Lys-11'-linked ubiquitination on Lys-46 and Lys-58; impairing the recruitment of guanosine diphosphate (GDP) dissociation inhibitor 1/GDI1. In terms of tissue distribution, highest levels found in lung, kidney, whole brain and spinal cord. Expressed in all tissues tested including Sertoli and germ cells (at protein level). Also detected in osteoclasts.

It is found in the cell membrane. It localises to the cytoplasmic vesicle membrane. The protein resides in the cell junction. Its subcellular location is the tight junction. The protein localises to the golgi apparatus. It is found in the trans-Golgi network membrane. It localises to the recycling endosome membrane. The protein resides in the cell projection. Its subcellular location is the lamellipodium. The catalysed reaction is GTP + H2O = GDP + phosphate + H(+). Regulated by guanine nucleotide exchange factors (GEFs) including DENND1C, which promote the exchange of bound GDP for free GTP. Regulated by GTPase activating proteins (GAPs) which increase the GTP hydrolysis activity. Inhibited by GDP dissociation inhibitors (GDIs). Activated in response to insulin. In terms of biological role, the small GTPases Rab are key regulators of intracellular membrane trafficking, from the formation of transport vesicles to their fusion with membranes. Rabs cycle between an inactive GDP-bound form and an active GTP-bound form that is able to recruit to membranes different sets of downstream effectors directly responsible for vesicle formation, movement, tethering and fusion. RAB13 is involved in endocytic recycling and regulates the transport to the plasma membrane of transmembrane proteins like the tight junction protein OCLN/occludin. Thereby, it regulates the assembly and the activity of tight junctions. Moreover, it may also regulate tight junction assembly by activating the PKA signaling pathway and by reorganizing the actin cytoskeleton through the activation of the downstream effectors PRKACA and MICALL2 respectively. Through its role in tight junction assembly, may play a role in the establishment of Sertoli cell barrier. Plays also a role in angiogenesis through regulation of endothelial cells chemotaxis. Also involved in neurite outgrowth. Has also been proposed to play a role in post-Golgi membrane trafficking from the TGN to the recycling endosome. Finally, it has been involved in insulin-induced transport to the plasma membrane of the glucose transporter GLUT4 and therefore may play a role in glucose homeostasis. The chain is Ras-related protein Rab-13 from Rattus norvegicus (Rat).